The primary structure comprises 790 residues: Probable E3 ubiquitin-protein ligase MARCHF10 (790 aa).

The segment at 33-240 (LKRQEHKKEP…PQNEPHTALS (208 aa)) is disordered. The span at 34–48 (KRQEHKKEPNEKKQE) shows a compositional bias: basic and acidic residues. Positions 61-70 (FSSGSSCKQS) are enriched in low complexity. A Phosphoserine modification is found at S78. A compositionally biased stretch (basic and acidic residues) spans 218-227 (PLERQKKGDP). A compositionally biased stretch (polar residues) spans 230–240 (RPQNEPHTALS). The stretch at 284-308 (LSLNNEQENYDTEEETRTEEELLLA) forms a coiled coil. Disordered stretches follow at residues 323–416 (GTSA…EDVS) and 507–569 (LSPI…RHLQ). Polar residues-rich tracts occupy residues 355-370 (RKTS…SSPG), 406-416 (GVTQVSAEDVS), and 511-520 (RNRNPSAASE). The span at 521 to 533 (SHSEDTQGEEERA) shows a compositional bias: basic and acidic residues. Over residues 534-563 (STSQAQESPLLSDLPNPQSSMALGDSPSSP) the composition is skewed to polar residues. The RING-CH-type zinc finger occupies 633 to 703 (DSEEEGDLCR…EMCKQGLLVD (71 aa)). 8 residues coordinate Zn(2+): C641, C644, C659, C661, H669, C672, C693, and C696. Residues 757–790 (ERMSRNYPQPRPEESESSESGDGNESNVYPGRVI) form a disordered region. Residues 774–783 (SESGDGNESN) are compositionally biased toward low complexity.

The enzyme catalyses S-ubiquitinyl-[E2 ubiquitin-conjugating enzyme]-L-cysteine + [acceptor protein]-L-lysine = [E2 ubiquitin-conjugating enzyme]-L-cysteine + N(6)-ubiquitinyl-[acceptor protein]-L-lysine.. It participates in protein modification; protein ubiquitination. Its function is as follows. E3 ubiquitin-protein ligase. E3 ubiquitin ligases accept ubiquitin from an E2 ubiquitin-conjugating enzyme in the form of a thioester and then directly transfer the ubiquitin to targeted substrates. In Rattus norvegicus (Rat), this protein is Probable E3 ubiquitin-protein ligase MARCHF10 (Marchf10).